We begin with the raw amino-acid sequence, 270 residues long: MLPYPQIDPVAVAIGPLQIHWYGLMYLVGIGGAWLLASRRLNKFDPTWTKEKLSDLIFWLAMGVIVGGRLGYVLFYDLSAYIANPLLIFEVWKGGMAFHGGFVGVMIAAWWFGKRNGKSFFQLMDFVAPLVPIGLGAGRIGNFINAELWGKPTDVPWAMVFPPFSDPAQLARHPSQLYQFALEGVALFIILNLYARKPRPTMAVSGMFALFYGIFRFVVEFVRVPDAQLGYLAWGWVTMGQILSLPMIIAGLFLIWLAYKRDPAASKAAA.

Transmembrane regions (helical) follow at residues 10-30 (VAVA…LVGI), 56-76 (LIFW…VLFY), 92-112 (WKGG…AWWF), 120-140 (FFQL…AGRI), 175-195 (SQLY…NLYA), 202-222 (MAVS…VEFV), and 237-257 (VTMG…LIWL). A 1,2-diacyl-sn-glycero-3-phospho-(1'-sn-glycerol) is bound at residue arginine 139.

The protein belongs to the Lgt family.

It localises to the cell inner membrane. It catalyses the reaction L-cysteinyl-[prolipoprotein] + a 1,2-diacyl-sn-glycero-3-phospho-(1'-sn-glycerol) = an S-1,2-diacyl-sn-glyceryl-L-cysteinyl-[prolipoprotein] + sn-glycerol 1-phosphate + H(+). It functions in the pathway protein modification; lipoprotein biosynthesis (diacylglyceryl transfer). Catalyzes the transfer of the diacylglyceryl group from phosphatidylglycerol to the sulfhydryl group of the N-terminal cysteine of a prolipoprotein, the first step in the formation of mature lipoproteins. The polypeptide is Phosphatidylglycerol--prolipoprotein diacylglyceryl transferase (Pseudomonas savastanoi pv. phaseolicola (strain 1448A / Race 6) (Pseudomonas syringae pv. phaseolicola (strain 1448A / Race 6))).